A 207-amino-acid chain; its full sequence is Tereporin-Ts1 (207 aa).

A signal peptide spans 1 to 11 (VIFALVLGNAS). An N-terminal region region spans residues 35-54 (SAGTSLASTILSGLAASGYR). 5 residues coordinate phosphocholine: Gly-111, Ser-129, Pro-131, Tyr-164, and Tyr-165.

Belongs to the actinoporin family. Conoidea subfamily. Octamer or nonamer in membranes. Monomer in the soluble state. Expressed by the venom duct.

The protein localises to the secreted. It localises to the nematocyst. Its subcellular location is the target cell membrane. Its function is as follows. Pore-forming protein that forms pores of around 1 nm and causes cardiac stimulation and cytolysis. The protein is Tereporin-Ts1 of Terebra subulata (Chocolate spotted auger).